Consider the following 88-residue polypeptide: uncharacterized protein (88 aa).

A signal peptide spans 1-23; sequence MAVSGLRLTIVWGLLVLILTCQA. The span at 25–40 shows a compositional bias: basic and acidic residues; the sequence is DKPEGKPDEQPHDSGK. Residues 25-45 form a disordered region; the sequence is DKPEGKPDEQPHDSGKNSEPA.

The protein resides in the secreted. This is an uncharacterized protein from Bos taurus (Bovine).